A 3118-amino-acid polypeptide reads, in one-letter code: Laminin subunit alpha-2 (3118 aa).

The first 19 residues, 1-19, serve as a signal peptide directing secretion; that stretch reads MPAATAGILLLLLLGTLEG. The Laminin N-terminal domain occupies 31–282; that stretch reads QQRGLFPAVL…SVKDISVGGM (252 aa). N-linked (GlcNAc...) asparagine glycosylation is found at N51 and N85. 6 disulfide bridges follow: C283/C292, C285/C303, C305/C314, C317/C337, C340/C349, and C342/C374. Laminin EGF-like domains follow at residues 283-339, 340-409, 410-464, and 465-513; these read CICY…ECEA, CNCH…PCQP, CHCD…DCQP, and CNCS…GCEE. N-linked (GlcNAc...) asparagine glycosylation occurs at N299. Residues N359 and N376 are each glycosylated (N-linked (GlcNAc...) asparagine). 10 disulfide bridges follow: C377/C386, C389/C407, C410/C422, C412/C438, C440/C449, C452/C462, C465/C478, C467/C482, C484/C493, and C496/C511. A glycan (N-linked (GlcNAc...) asparagine) is linked at N466. The region spanning 514 to 523 is the Laminin EGF-like 5; first part domain; the sequence is CFCSGVSNRC. Residues 527–719 enclose the Laminin IV type A 1 domain; that stretch reads YWTYGNIQDM…DRRIATDVEV (193 aa). The Laminin EGF-like 5; second part domain occupies 720-752; it reads CQCPPGYSGSSCETCWPRHRRVNGTIFGGICEP. A glycan (N-linked (GlcNAc...) asparagine) is linked at N742. 32 cysteine pairs are disulfide-bonded: C753-C762, C755-C769, C772-C781, C784-C800, C803-C818, C805-C828, C831-C840, C843-C858, C861-C875, C863-C882, C885-C894, C897-C911, C914-C926, C916-C933, C935-C944, C947-C960, C963-C975, C965-C981, C983-C992, C995-C1007, C1010-C1019, C1012-C1026, C1028-C1037, C1040-C1053, C1056-C1068, C1058-C1075, C1077-C1086, C1089-C1099, C1102-C1114, C1104-C1130, C1132-C1141, and C1144-C1159. Laminin EGF-like domains lie at 753–802, 803–860, 861–913, 914–962, 963–1009, 1010–1055, 1056–1101, and 1102–1161; these read CQCF…DCQP, CACP…SCQP, CQCN…NCQP, CRCN…GCLP, CNCN…GCIA, CDCS…GCKV, CNCS…LCTL, and CDCF…GCSS. A glycan (N-linked (GlcNAc...) asparagine) is linked at N919. A glycan (N-linked (GlcNAc...) asparagine) is linked at N1031. N1057 carries N-linked (GlcNAc...) asparagine glycosylation. In terms of domain architecture, Laminin EGF-like 14; first part spans 1162-1171; the sequence is CYCFGVTSQC. Residues 1172-1375 enclose the Laminin IV type A 2 domain; the sequence is SEAKGLIRTW…GSPPAHLIER (204 aa). A Laminin EGF-like 14; second part domain is found at 1376–1415; the sequence is CDCPPGYSGLSCETCAPGFYRLRSEPGGRTPGPTLGTCVP. 13 cysteine pairs are disulfide-bonded: C1378-C1387, C1416-C1425, C1418-C1432, C1435-C1444, C1447-C1462, C1465-C1480, C1467-C1490, C1493-C1502, C1505-C1520, C1523-C1535, C1525-C1542, C1544-C1553, and C1556-C1567. 3 consecutive Laminin EGF-like domains span residues 1416–1464, 1465–1522, and 1523–1569; these read CQCN…DCQP, CACP…SCQE, and CECD…ECVF. The interval 1570–2140 is domain II and I; sequence CGDECTGLLL…NQARKQANSI (571 aa). N-linked (GlcNAc...) asparagine glycosylation is found at N1593, N1610, N1696, N1806, N1897, N1912, N1916, N2013, N2024, N2041, N2122, and N2236. The stretch at 1662-1863 forms a coiled coil; the sequence is QDAERTNSRA…DIKTKLPPMS (202 aa). Residues 1923 to 2146 are a coiled coil; it reads AYSNIKDYID…ANSIKVSVSS (224 aa). Laminin G-like domains are found at residues 2141–2324, 2336–2517, 2522–2706, 2759–2930, and 2929–3115; these read KVSV…CKGC, TIQF…TKGC, VYTV…IGRC, SKQF…VGTC, and TCFA…PVSC. A disulfide bond links C2298 and C2324. N2356, N2431, and N2474 each carry an N-linked (GlcNAc...) asparagine glycan. A disulfide bridge connects residues C2491 and C2517. N-linked (GlcNAc...) asparagine glycans are attached at residues N2547, N2554, and N2644. Cysteines 2679 and 2706 form a disulfide. An N-linked (GlcNAc...) asparagine glycan is attached at N2889. 2 disulfide bridges follow: C2905-C2930 and C3083-C3115.

Laminin is a complex glycoprotein, consisting of three different polypeptide chains (alpha, beta, gamma), which are bound to each other by disulfide bonds into a cross-shaped molecule comprising one long and three short arms with globules at each end. Alpha-2 is a subunit of laminin-2 (laminin-211 or merosin), laminin-4 (laminin-221 or S-merosin) and laminin-12 (laminin-213). Interacts with FBLN1, FBLN2 and NID2.

The protein localises to the secreted. It localises to the extracellular space. The protein resides in the extracellular matrix. It is found in the basement membrane. Binding to cells via a high affinity receptor, laminin is thought to mediate the attachment, migration and organization of cells into tissues during embryonic development by interacting with other extracellular matrix components. This is Laminin subunit alpha-2 (Lama2) from Mus musculus (Mouse).